Here is a 77-residue protein sequence, read N- to C-terminus: MAASREFIICCFLTLLLCNFFMRVESGAAADVSRGGCGGGDGSLGDDNERCVEAVKEDDDDDVDDVYKVINKMRIYA.

An N-terminal signal peptide occupies residues 1–29 (MAASREFIICCFLTLLLCNFFMRVESGAA). Cysteines 37 and 51 form a disulfide.

It belongs to the plant rapid alkalinization factor (RALF) family.

The protein localises to the secreted. In terms of biological role, cell signaling peptide that may regulate plant stress, growth, and development. Mediates a rapid alkalinization of extracellular space by mediating a transient increase in the cytoplasmic Ca(2+) concentration leading to a calcium-dependent signaling events through a cell surface receptor and a concomitant activation of some intracellular mitogen-activated protein kinases. This chain is Protein RALF-like 17 (RALFL17), found in Arabidopsis thaliana (Mouse-ear cress).